The chain runs to 338 residues: 2-methyl-6-phytyl-1,4-hydroquinone methyltransferase, chloroplastic (338 aa).

A chloroplast-targeting transit peptide spans 1–51 (MASLMLNGAITFPKGLGSPGSNLHARSIPRPTLLSVTRTSTPRLSVATRCS). Residues 52–307 (SSSVSSSRPS…VNNPFSFLGR (256 aa)) are Chloroplast intermembrane-facing. Residues 114–123 (VVDVGGGTGF) form an SAM motif I region. The interval 159–172 (CKIVEGDAEDLPFP) is SAM motif II. The tract at residues 200-213 (RVLKIGGKACLIGP) is SAM motif III. The chain crosses the membrane as a helical span at residues 308 to 328 (FLLGTLAAAWFVLIPIYMWIK). At 329 to 338 (DQIVPKDQPI) the chain is on the stromal side.

This sequence belongs to the class I-like SAM-binding methyltransferase superfamily. MPBQ/MBSQ MT family.

The protein resides in the plastid. It localises to the chloroplast inner membrane. The catalysed reaction is 2-methyl-6-phytyl-1,4-benzene-1,4-diol + S-adenosyl-L-methionine = 2,3-dimethyl-6-phytylbenzene-1,4-diol + S-adenosyl-L-homocysteine + H(+). It catalyses the reaction 2-methyl-6-(all-trans-nonaprenyl)benzene-1,4-diol + S-adenosyl-L-methionine = plastoquinol-9 + S-adenosyl-L-homocysteine + H(+). It carries out the reaction 6-geranylgeranyl-2-methylbenzene-1,4-diol + S-adenosyl-L-methionine = 6-geranylgeranyl-2,3-dimethylbenzene-1,4-diol + S-adenosyl-L-homocysteine + H(+). Its pathway is cofactor biosynthesis; tocopherol biosynthesis. Its function is as follows. Involved in a key methylation step in both tocopherols (vitamin E) and plastoquinone synthesis. Catalyzes the conversion of 2-methyl-6-phytyl-1,4-hydroquinone (MPBQ) to 2,3-dimethyl-6-phytyl-1,4-hydroquinone (DMPQ, a substrate for tocopherol cyclase), and 2-methyl-6-solanyl-1,4-benzoquinone (MSBQ) to plastoquinone. The protein is 2-methyl-6-phytyl-1,4-hydroquinone methyltransferase, chloroplastic (VTE3) of Arabidopsis thaliana (Mouse-ear cress).